A 204-amino-acid polypeptide reads, in one-letter code: ATP-dependent Clp protease proteolytic subunit (204 aa).

S102 acts as the Nucleophile in catalysis. Residue H127 is part of the active site.

This sequence belongs to the peptidase S14 family. Fourteen ClpP subunits assemble into 2 heptameric rings which stack back to back to give a disk-like structure with a central cavity, resembling the structure of eukaryotic proteasomes.

It localises to the cytoplasm. The enzyme catalyses Hydrolysis of proteins to small peptides in the presence of ATP and magnesium. alpha-casein is the usual test substrate. In the absence of ATP, only oligopeptides shorter than five residues are hydrolyzed (such as succinyl-Leu-Tyr-|-NHMec, and Leu-Tyr-Leu-|-Tyr-Trp, in which cleavage of the -Tyr-|-Leu- and -Tyr-|-Trp bonds also occurs).. Its function is as follows. Cleaves peptides in various proteins in a process that requires ATP hydrolysis. Has a chymotrypsin-like activity. Plays a major role in the degradation of misfolded proteins. The chain is ATP-dependent Clp protease proteolytic subunit from Neisseria meningitidis serogroup C (strain 053442).